The primary structure comprises 564 residues: E3 ubiquitin-protein ligase RNF168 (564 aa).

The RING-type zinc finger occupies 16–55; sequence CGICMEILVEPVTLPCNHTLCNPCFQSTVEKANLCCPFCR. At S70 the chain carries Phosphoserine. Positions 110 to 128 match the LR motif 1 motif; that stretch reads LSKPGELRREYEEEISKVE. Position 134 is a phosphoserine (S134). Residues 143–151 carry the UMI motif motif; sequence EEYIQRLLA. Disordered regions lie at residues 149–179 and 193–291; these read LLAEEEEEEKRRTERRRSEMEEQLRGDEELA and NILA…QGPE. A compositionally biased stretch (basic and acidic residues) spans 157 to 179; that stretch reads EKRRTERRRSEMEEQLRGDEELA. The MIU motif 1 motif lies at 168-191; the sequence is MEEQLRGDEELARRLSTSINSNYE. A Phosphoserine modification is found at S197. K210 is covalently cross-linked (Glycyl lysine isopeptide (Lys-Gly) (interchain with G-Cter in SUMO2)). Basic and acidic residues predominate over residues 242–259; it reads KTEHGEDMCKSKETDSSD. Positions 275-288 are enriched in polar residues; sequence PTHSPQTCPETQGQ. 2 positions are modified to phosphothreonine: T348 and T361. S413 and S414 each carry phosphoserine. The short motif at 438–461 is the MIU motif 2 element; it reads RHKQEEQDRLLALQLQKEADKEKM. Residues 455 to 564 are disordered; the sequence is EADKEKMVPN…QKSILQMFQR (110 aa). The LR motif 2 signature appears at 465–476; that stretch reads RQKGSPDQYQLR. The span at 466 to 480 shows a compositional bias: polar residues; sequence QKGSPDQYQLRTSSP. S469 is subject to Phosphoserine. A compositionally biased stretch (basic and acidic residues) spans 491-515; the sequence is NVKDRNSPKQTADRSKSQRSRKGEY. 2 stretches are compositionally biased toward polar residues: residues 519 to 531 and 555 to 564; these read FESTWKGSVNGTK and QKSILQMFQR. Residue K524 forms a Glycyl lysine isopeptide (Lys-Gly) (interchain with G-Cter in SUMO2) linkage.

Belongs to the RNF168 family. In terms of assembly, monomer. Interacts with UBE2N/UBC13. Post-translationally, sumoylated with SUMO1 by PIAS4 in response to double-strand breaks (DSBs). In terms of processing, ubiquitinated.

The protein localises to the nucleus. The catalysed reaction is S-ubiquitinyl-[E2 ubiquitin-conjugating enzyme]-L-cysteine + [acceptor protein]-L-lysine = [E2 ubiquitin-conjugating enzyme]-L-cysteine + N(6)-ubiquitinyl-[acceptor protein]-L-lysine.. Its pathway is protein modification; protein ubiquitination. Its function is as follows. E3 ubiquitin-protein ligase required for accumulation of repair proteins to sites of DNA damage. Acts with UBE2N/UBC13 to amplify the RNF8-dependent histone ubiquitination. Recruited to sites of DNA damage at double-strand breaks (DSBs) by binding to ubiquitinated histone H2A and H2AX and amplifies the RNF8-dependent H2A ubiquitination, promoting the formation of 'Lys-63'-linked ubiquitin conjugates. This leads to concentrate ubiquitinated histones H2A and H2AX at DNA lesions to the threshold required for recruitment of TP53BP1 and BRCA1. Also recruited at DNA interstrand cross-links (ICLs) sites and promotes accumulation of 'Lys-63'-linked ubiquitination of histones H2A and H2AX, leading to recruitment of FAAP20 and Fanconi anemia (FA) complex, followed by interstrand cross-link repair. H2A ubiquitination also mediates the ATM-dependent transcriptional silencing at regions flanking DSBs in cis, a mechanism to avoid collision between transcription and repair intermediates. Also involved in class switch recombination in immune system, via its role in regulation of DSBs repair. Following DNA damage, promotes the ubiquitination and degradation of JMJD2A/KDM4A in collaboration with RNF8, leading to unmask H4K20me2 mark and promote the recruitment of TP53BP1 at DNA damage sites. Not able to initiate 'Lys-63'-linked ubiquitination in vitro; possibly due to partial occlusion of the UBE2N/UBC13-binding region. Catalyzes monoubiquitination of 'Lys-13' and 'Lys-15' of nucleosomal histone H2A (H2AK13Ub and H2AK15Ub, respectively). The chain is E3 ubiquitin-protein ligase RNF168 from Rattus norvegicus (Rat).